The sequence spans 271 residues: tRNA pseudouridine synthase A (271 aa).

The active-site Nucleophile is Asp51. Residue Tyr109 participates in substrate binding.

The protein belongs to the tRNA pseudouridine synthase TruA family. As to quaternary structure, homodimer.

It catalyses the reaction uridine(38/39/40) in tRNA = pseudouridine(38/39/40) in tRNA. Functionally, formation of pseudouridine at positions 38, 39 and 40 in the anticodon stem and loop of transfer RNAs. In Methylococcus capsulatus (strain ATCC 33009 / NCIMB 11132 / Bath), this protein is tRNA pseudouridine synthase A.